The chain runs to 309 residues: Small ribosomal subunit protein mS23 (309 aa).

This sequence belongs to the mitochondrion-specific ribosomal protein mS23 family. As to quaternary structure, component of the mitochondrial small ribosomal subunit.

It is found in the mitochondrion. This is Small ribosomal subunit protein mS23 (RSM25) from Lodderomyces elongisporus (strain ATCC 11503 / CBS 2605 / JCM 1781 / NBRC 1676 / NRRL YB-4239) (Yeast).